The following is a 419-amino-acid chain: MNIIDELEWRGAVNQQTDEEGLRKLVEEKKISLYCGVDPTGDSMHIGHLIPFMMMKRFQLAGHHPVILIGGATGTIGDPSGRQSERQLQTLEVVQHNVDALTAQMKKLFDFGGNSEVKMVNNYDWTHEINIIEFLRDYGKNFSINSMLAKDIVASRLDTGISFTEFTYQILQAMDFHHLYKKEDVQLQIGGSDQWGNITSGLDLIRKLEGHEAKVFGLTIPLLLKSDGTKFGKSAGGAVWLDPEKTTPFEFYQFWVNTDDRDVVKYLKYFTFLTKERIDELAVKVETEPHKREAQKVLAEEMTKFVHGEEALLQAVKITAALFSGDIKSLTADEIEQGFKEMPTFQSSKETKNIVEWLVDLGIEPSRRQAREDINNGAISMNGEKVTDVGTDVTVENSFDGRFIIIRKGKKNYSLVKLG.

Residue Y34 participates in L-tyrosine binding. The 'HIGH' region motif lies at 39–48 (PTGDSMHIGH). Residues Y168 and Q172 each contribute to the L-tyrosine site. Positions 230–234 (KFGKS) match the 'KMSKS' region motif. K233 is an ATP binding site. Residues 352–418 (KNIVEWLVDL…GKKNYSLVKL (67 aa)) enclose the S4 RNA-binding domain.

Belongs to the class-I aminoacyl-tRNA synthetase family. TyrS type 1 subfamily. As to quaternary structure, homodimer.

It localises to the cytoplasm. It carries out the reaction tRNA(Tyr) + L-tyrosine + ATP = L-tyrosyl-tRNA(Tyr) + AMP + diphosphate + H(+). In terms of biological role, catalyzes the attachment of tyrosine to tRNA(Tyr) in a two-step reaction: tyrosine is first activated by ATP to form Tyr-AMP and then transferred to the acceptor end of tRNA(Tyr). The polypeptide is Tyrosine--tRNA ligase 2 (Bacillus cereus (strain ZK / E33L)).